The following is a 111-amino-acid chain: Large ribosomal subunit protein uL24 (111 aa).

The protein belongs to the universal ribosomal protein uL24 family. In terms of assembly, part of the 50S ribosomal subunit.

Functionally, one of two assembly initiator proteins, it binds directly to the 5'-end of the 23S rRNA, where it nucleates assembly of the 50S subunit. One of the proteins that surrounds the polypeptide exit tunnel on the outside of the subunit. In Chlamydia trachomatis serovar A (strain ATCC VR-571B / DSM 19440 / HAR-13), this protein is Large ribosomal subunit protein uL24.